Here is a 1073-residue protein sequence, read N- to C-terminus: Guanylyl cyclase C (1073 aa).

Positions 1–23 (MKTLLLDLALWSLLFQPGWLSFS) are cleaved as a signal peptide. Topologically, residues 24 to 430 (SQVSQNCHNG…PNDITGRGPQ (407 aa)) are extracellular. N-linked (GlcNAc...) asparagine glycans are attached at residues Asn-32, Asn-75, Asn-79, Asn-195, Asn-284, Asn-307, Asn-345, and Asn-402. A helical membrane pass occupies residues 431-454 (ILMIAVFTLTGAVVLLLLVALLML). Residues 455–1073 (RKYRKDYELR…NTTDKESTYF (619 aa)) lie on the Cytoplasmic side of the membrane. The 261-residue stretch at 489–749 (LKIDDDKRRD…KIETTLAKIF (261 aa)) folds into the Protein kinase domain. The Guanylate cyclase domain occupies 824 to 954 (TIYFSDIVGF…DTVNTASRME (131 aa)).

The protein belongs to the adenylyl cyclase class-4/guanylyl cyclase family. In terms of assembly, homotrimer. Interacts via its C-terminal region with NHERF4. Interacts with the lectin chaperone VIP36. Glycosylation at Asn-75 and/or Asn-79 is required for interaction with VIP36 while glycosylation at Asn-345 and Asn-402 modulates ligand-mediated GUCY2C activation.

Its subcellular location is the cell membrane. It is found in the endoplasmic reticulum membrane. It carries out the reaction GTP = 3',5'-cyclic GMP + diphosphate. Functionally, guanylyl cyclase that catalyzes synthesis of cyclic GMP (cGMP) from GTP. Receptor for the E.coli heat-stable enterotoxin; E.coli enterotoxin markedly stimulates the accumulation of cGMP in mammalian cells expressing GUCY2C. Also activated by the endogenous peptides guanylin and uroguanylin. This chain is Guanylyl cyclase C, found in Homo sapiens (Human).